The sequence spans 253 residues: Imidazole glycerol phosphate synthase subunit HisF (253 aa).

Active-site residues include aspartate 11 and aspartate 130.

This sequence belongs to the HisA/HisF family. In terms of assembly, heterodimer of HisH and HisF.

The protein localises to the cytoplasm. The enzyme catalyses 5-[(5-phospho-1-deoxy-D-ribulos-1-ylimino)methylamino]-1-(5-phospho-beta-D-ribosyl)imidazole-4-carboxamide + L-glutamine = D-erythro-1-(imidazol-4-yl)glycerol 3-phosphate + 5-amino-1-(5-phospho-beta-D-ribosyl)imidazole-4-carboxamide + L-glutamate + H(+). It functions in the pathway amino-acid biosynthesis; L-histidine biosynthesis; L-histidine from 5-phospho-alpha-D-ribose 1-diphosphate: step 5/9. Functionally, IGPS catalyzes the conversion of PRFAR and glutamine to IGP, AICAR and glutamate. The HisF subunit catalyzes the cyclization activity that produces IGP and AICAR from PRFAR using the ammonia provided by the HisH subunit. The protein is Imidazole glycerol phosphate synthase subunit HisF of Paracoccus denitrificans (strain Pd 1222).